A 917-amino-acid polypeptide reads, in one-letter code: MDYKETLLMPKTDFPMRGGLPNKEPQIQEKWDAEDQYHKALEKNKGNETFILHDGPPYANGNLHMGHALNKILKDFIVRYKTMQGFYAPYVPGWDTHGLPIEQALTKKGVDRKKMSTAEFREKCKEFALEQIELQKKDFRRLGVRGDFNDPYITLKPEYEAAQIRIFGEMADKGLIYKGKKPVYWSPSSESSLAEAEIEYHDKRSASIYVAFNVKDDKGVVDADAKFIIWTTTPWTIPSNVAITVHPELKYGQYNVNGEKYIIAEALSDAVAEALDWDKASIKLEKEYTGKELEYVVAQHPFLDRESLVINGDHVTTDAGTGCVHTAPGHGEDDYIVGQKYELPVISPIDDKGVFTEEGGQFEGMFYDKANKAVTDLLTEKGALLKLDFITHSYPHDWRTKKPVIFRATPQWFASISKVRQDILDAIENTNFKVNWGKTRIYNMVRDRGEWVISRQRVWGVPLPVFYAENGEIIMTKETVNHVADLFAEHGSNIWFEREAKDLLPEGFTHPGSPNGTFTKETDIMDVWFDSGSSHRGVLETRPELSFPADMYLEGSDQYRGWFNSSITTSVATRGVSPYKFLLSHGFVMDGEGKKMSKSLGNVIVPDQVVKQKGADIARLWVSSTDYLADVRISDEILKQTSDVYRKIRNTLRFMLGNINDFNPDTDSIPESELLEVDRYLLNRLREFTASTINNYENFDYLNIYQEVQNFINVELSNFYLDYGKDILYIEQRDSHIRRSMQTVLYQILVDMTKLLAPILVHTAEEVWSHTPHVKEESVHLADMPKVVEVDQALLDKWRTFMNLRDDVNRALETARNEKVIGKSLEAKVTIASNDKFNASEFLTSFDALHQLFIVSQVKVVDKLDDQATAYEHGDIVIEHADGEKCERCWNYSEDLGAVDELTHLCPRCQQVVKSLV.

L-isoleucyl-5'-AMP is bound by residues P56, H67, E554, G555, D557, Q558, and H585. The 'HIGH' region motif lies at 57–67; the sequence is PYANGNLHMGH. The 'KMSKS' region motif lies at 595-599; it reads KMSKS. K598 contacts ATP. The tRNA(Ile) site is built by R632 and Q640. C886, C889, C906, and C909 together coordinate Zn(2+).

Belongs to the class-I aminoacyl-tRNA synthetase family. IleS type 1 subfamily. As to quaternary structure, monomer. The cofactor is Zn(2+).

Its subcellular location is the cytoplasm. It carries out the reaction tRNA(Ile) + L-isoleucine + ATP = L-isoleucyl-tRNA(Ile) + AMP + diphosphate. Catalyzes the attachment of isoleucine to tRNA(Ile). As IleRS can inadvertently accommodate and process structurally similar amino acids such as valine, to avoid such errors it has two additional distinct tRNA(Ile)-dependent editing activities. One activity is designated as 'pretransfer' editing and involves the hydrolysis of activated Val-AMP. The other activity is designated 'posttransfer' editing and involves deacylation of mischarged Val-tRNA(Ile). In Staphylococcus aureus, this protein is Isoleucine--tRNA ligase (ileS).